We begin with the raw amino-acid sequence, 224 residues long: 7-cyano-7-deazaguanine synthase (224 aa).

12 to 22 (LSGGLDSSTVT) serves as a coordination point for ATP. Zn(2+) contacts are provided by Cys193, Cys201, Cys204, and Cys207.

This sequence belongs to the QueC family. Zn(2+) is required as a cofactor.

The enzyme catalyses 7-carboxy-7-deazaguanine + NH4(+) + ATP = 7-cyano-7-deazaguanine + ADP + phosphate + H2O + H(+). It participates in purine metabolism; 7-cyano-7-deazaguanine biosynthesis. In terms of biological role, catalyzes the ATP-dependent conversion of 7-carboxy-7-deazaguanine (CDG) to 7-cyano-7-deazaguanine (preQ(0)). The chain is 7-cyano-7-deazaguanine synthase from Prochlorococcus marinus (strain MIT 9515).